Reading from the N-terminus, the 310-residue chain is Upstream stimulatory factor 1 (310 aa).

A compositionally biased stretch (polar residues) spans 1–17 (MKGQQKTAETEEGTVQI). Disordered stretches follow at residues 1–26 (MKGQ…ATGE) and 171–209 (QGGS…EVER). The segment covering 194–209 (TTRDEKRRAQHNEVER) has biased composition (basic and acidic residues). The 56-residue stretch at 199–254 (KRRAQHNEVERRRRDKINNWIVQLSKIIPDCSMESTKSGQSKGGILSKACDYIQEL) folds into the bHLH domain. The segment at 271–292 (LQLDNDVLRQQVEDLKNKNLLL) is leucine-zipper. Residue Lys-306 forms a Glycyl lysine isopeptide (Lys-Gly) (interchain with G-Cter in SUMO2) linkage.

As to quaternary structure, efficient DNA binding requires dimerization with another bHLH protein. Binds DNA as a homodimer or a heterodimer (USF1/USF2).

The protein resides in the nucleus. Its function is as follows. Transcription factor that binds to a symmetrical DNA sequence (E-boxes) (5'-CACGTG-3') that is found in a variety of viral and cellular promoters. Regulates the expression of the surfactant protein-A (SP-A) gene. This chain is Upstream stimulatory factor 1 (USF1), found in Oryctolagus cuniculus (Rabbit).